The primary structure comprises 821 residues: Spindle apparatus protein lin-5 (821 aa).

Positions 161 to 199 are disordered; it reads EASSGFRTPKRNNYSLTSLQTPTATARRLRTASSTARRS. Over residues 162–180 the composition is skewed to polar residues; sequence ASSGFRTPKRNNYSLTSLQ. Residues 181-199 show a composition bias toward low complexity; the sequence is TPTATARRLRTASSTARRS. Residues 211–634 adopt a coiled-coil conformation; sequence KFMRSERELK…REKESAEIKK (424 aa). 2 disordered regions span residues 736 to 758 and 779 to 821; these read RSES…FTPS and LKCS…SKKQ.

In terms of assembly, interacts with gpr-1; gpr-1 forms a complex with gpr-2 and GDP-bound goa-1.

Its subcellular location is the cytoplasm. The protein localises to the cell cortex. The protein resides in the cytoskeleton. It is found in the spindle. It localises to the chromosome. Its subcellular location is the centromere. The protein localises to the kinetochore. The protein resides in the microtubule organizing center. It is found in the centrosome. Essential component of the spindle apparatus required for spindle positioning and chromosome movement. Acts to recruit or anchor gpr-1/gpr-2 complex to the spindle and cortex. Also involved, directly or indirectly, in cytokinesis and in the coupling of DNA replication, centrosome duplication and mitotic division. The polypeptide is Spindle apparatus protein lin-5 (lin-5) (Caenorhabditis elegans).